Here is a 1137-residue protein sequence, read N- to C-terminus: Voltage-dependent calcium channel subunit alpha-2/delta-4 (1137 aa).

An N-terminal signal peptide occupies residues 1–19 (MVCGCSALLPLPNPRPTMP). Residues 20–1115 (ATPNFLANPS…AQDCGGASDT (1096 aa)) lie on the Extracellular side of the membrane. An N-linked (GlcNAc...) asparagine glycan is attached at Asn-201. One can recognise a VWFA domain in the interval 291–473 (DIVILVDVSG…ENVMEYLHVL (183 aa)). A divalent metal cation-binding residues include Asp-297, Ser-299, and Ser-301. Positions 297–301 (DVSGS) match the MIDAS-like motif motif. A disulfide bond links Cys-447 and Cys-1097. One can recognise a Cache domain in the interval 487 to 580 (WTEAYMDSKL…RPLYREGKKL (94 aa)). Asn-664 is a glycosylation site (N-linked (GlcNAc...) asparagine). The helical transmembrane segment at 1116–1136 (SASPPLLLLPVCAWGLLPQLL) threads the bilayer. A topological domain (cytoplasmic) is located at residue Arg-1137.

It belongs to the calcium channel subunit alpha-2/delta family. Dimer formed of alpha-2-2 and delta-2 chains; disulfide-linked. Voltage-dependent calcium channels are multisubunit complexes, consisting of alpha-1 (CACNA1), alpha-2 (CACNA2D), beta (CACNB) and delta (CACNA2D) subunits in a 1:1:1:1 ratio. Interacts with CACNA1C and CACNB3. May be proteolytically processed into subunits alpha-2-4 and delta-4 that are disulfide-linked. It is however unclear whether such cleavage really takes place in vivo and has a functional role. Predominantly expressed in certain types of endocrine cells. Present in the Paneth cells of the small intestine. Also present in the erythroblasts in the fetal liver, in the cells of the zona reticularis of the adrenal gland and in the basophils of the pituitary. Present at low level in some brain regions such as the cerebellum (at protein level).

The protein localises to the membrane. In terms of biological role, the alpha-2/delta subunit of voltage-dependent calcium channels regulates calcium current density and activation/inactivation kinetics of the calcium channel. In Homo sapiens (Human), this protein is Voltage-dependent calcium channel subunit alpha-2/delta-4 (CACNA2D4).